The chain runs to 389 residues: UDP-N-acetylglucosamine--N-acetylmuramyl-(pentapeptide) pyrophosphoryl-undecaprenol N-acetylglucosamine transferase (389 aa).

Residues 39–41, N157, R193, S221, I275, 294–299, and Q320 each bind UDP-N-acetyl-alpha-D-glucosamine; these read TGG and ALTVSE.

The protein belongs to the glycosyltransferase 28 family. MurG subfamily.

The protein localises to the cell inner membrane. It catalyses the reaction di-trans,octa-cis-undecaprenyl diphospho-N-acetyl-alpha-D-muramoyl-L-alanyl-D-glutamyl-meso-2,6-diaminopimeloyl-D-alanyl-D-alanine + UDP-N-acetyl-alpha-D-glucosamine = di-trans,octa-cis-undecaprenyl diphospho-[N-acetyl-alpha-D-glucosaminyl-(1-&gt;4)]-N-acetyl-alpha-D-muramoyl-L-alanyl-D-glutamyl-meso-2,6-diaminopimeloyl-D-alanyl-D-alanine + UDP + H(+). The protein operates within cell wall biogenesis; peptidoglycan biosynthesis. Cell wall formation. Catalyzes the transfer of a GlcNAc subunit on undecaprenyl-pyrophosphoryl-MurNAc-pentapeptide (lipid intermediate I) to form undecaprenyl-pyrophosphoryl-MurNAc-(pentapeptide)GlcNAc (lipid intermediate II). The chain is UDP-N-acetylglucosamine--N-acetylmuramyl-(pentapeptide) pyrophosphoryl-undecaprenol N-acetylglucosamine transferase from Saccharophagus degradans (strain 2-40 / ATCC 43961 / DSM 17024).